The chain runs to 110 residues: SLYAPSAVVISKTQGASADAPAQRAVTLRCLPVGGDHPAPEKACAALREAGGDPAALPRYVEDTGRVCTREYRPVTVSVQGVWDGRRIDHAQTFSNSCELEKQTASVYAF.

2 disulfides stabilise this stretch: C30-C44 and C68-C98.

It belongs to the protease inhibitor I16 (SSI) family. In terms of assembly, homodimer.

It is found in the secreted. Strong inhibitor of subtilisin BPN'. This Streptomyces cacaoi protein is Subtilisin inhibitor-like protein 1.